Here is a 197-residue protein sequence, read N- to C-terminus: Phosphoheptose isomerase (197 aa).

The 163-residue stretch at 34–196 folds into the SIS domain; that stretch reads MVHCLLSGNK…DHTLFPQDEQ (163 aa). 49 to 51 contacts substrate; the sequence is NGG. 2 residues coordinate Zn(2+): His58 and Glu62. Residues Glu62, 91 to 92, 117 to 119, Ser122, and Gln172 each bind substrate; these read ND and STS. 2 residues coordinate Zn(2+): Gln172 and His180.

The protein belongs to the SIS family. GmhA subfamily. Homotetramer. Zn(2+) serves as cofactor.

The protein localises to the cytoplasm. It carries out the reaction 2 D-sedoheptulose 7-phosphate = D-glycero-alpha-D-manno-heptose 7-phosphate + D-glycero-beta-D-manno-heptose 7-phosphate. It participates in carbohydrate biosynthesis; D-glycero-D-manno-heptose 7-phosphate biosynthesis; D-glycero-alpha-D-manno-heptose 7-phosphate and D-glycero-beta-D-manno-heptose 7-phosphate from sedoheptulose 7-phosphate: step 1/1. Functionally, catalyzes the isomerization of sedoheptulose 7-phosphate in D-glycero-D-manno-heptose 7-phosphate. The protein is Phosphoheptose isomerase of Shewanella halifaxensis (strain HAW-EB4).